The following is a 157-amino-acid chain: MTEILGLPITRPVKVGIVVADFNDLVTTRLLAGAQQALRQAGIPEENILVVQVPGAMELPRVTRRLSETGVIDGVIALGAVVQGETDHYTYVCQQSAAGLAQASLTGPIPVMFGVLMTANMDQALNRAGGKGGNKGRECAQALLQVLSVEQQLSELR.

Residues F22, 56–58, and 80–82 contribute to the 5-amino-6-(D-ribitylamino)uracil site; these read AME and AVV. Residue 85–86 coordinates (2S)-2-hydroxy-3-oxobutyl phosphate; the sequence is ET. H88 (proton donor) is an active-site residue. F113 is a binding site for 5-amino-6-(D-ribitylamino)uracil. Position 127 (R127) interacts with (2S)-2-hydroxy-3-oxobutyl phosphate.

Belongs to the DMRL synthase family.

It carries out the reaction (2S)-2-hydroxy-3-oxobutyl phosphate + 5-amino-6-(D-ribitylamino)uracil = 6,7-dimethyl-8-(1-D-ribityl)lumazine + phosphate + 2 H2O + H(+). It participates in cofactor biosynthesis; riboflavin biosynthesis; riboflavin from 2-hydroxy-3-oxobutyl phosphate and 5-amino-6-(D-ribitylamino)uracil: step 1/2. In terms of biological role, catalyzes the formation of 6,7-dimethyl-8-ribityllumazine by condensation of 5-amino-6-(D-ribitylamino)uracil with 3,4-dihydroxy-2-butanone 4-phosphate. This is the penultimate step in the biosynthesis of riboflavin. In Levilactobacillus brevis (strain ATCC 367 / BCRC 12310 / CIP 105137 / JCM 1170 / LMG 11437 / NCIMB 947 / NCTC 947) (Lactobacillus brevis), this protein is 6,7-dimethyl-8-ribityllumazine synthase.